The sequence spans 1435 residues: Neuropathy target esterase sws (1435 aa).

Residues 1-35 lie on the Lumenal side of the membrane; the sequence is MDVLELLRVSGSNMYYSTFLADAWCYYISNQITMT. The chain crosses the membrane as a helical span at residues 36–56; sequence MYLYCALGVLSMLFIGWFVYF. Residues 57-1435 are Cytoplasmic-facing; it reads KRLARLRLRH…NTNNETKNYL (1379 aa). 176-303 provides a ligand contact to a nucleoside 3',5'-cyclic phosphate; the sequence is IFGHFEKPIF…IRVIQVIMIR (128 aa). A compositionally biased stretch (low complexity) spans 361 to 372; the sequence is AASGTAGSTHTA. Disordered stretches follow at residues 361–405 and 422–452; these read AASG…ELSG and NSYP…QPEV. Residues 435–449 show a composition bias toward polar residues; the sequence is GNLSTRRGSITQQEQ. S443 carries the phosphoserine modification. A nucleoside 3',5'-cyclic phosphate is bound by residues 474–601 and 590–717; these read ELGL…VVRR and IVLD…LSHR. Positions 944-1110 constitute a PNPLA domain; that stretch reads LVLGGGGARG…VNNLPGHLWR (167 aa). The short motif at 948–953 is the GXGXXG element; sequence GGGARG. A GXSXG motif is present at residues 975-979; sequence GVSIG. S977 functions as the Nucleophile in the catalytic mechanism. D1097 serves as the catalytic Proton acceptor. The DGA/G motif lies at 1097-1099; the sequence is DGG. Residues 1308–1435 are disordered; that stretch reads MDKATQSTPP…NTNNETKNYL (128 aa). Residues 1311–1322 show a composition bias toward polar residues; the sequence is ATQSTPPLQSKA. Basic and acidic residues-rich tracts occupy residues 1330–1361 and 1393–1424; these read SKEE…RELS and MDKK…KENR. Positions 1425–1435 are enriched in polar residues; the sequence is SNTNNETKNYL.

Belongs to the NTE family. In terms of assembly, interacts with Pka-C3; interaction inhibits the catalytic function of Pka-C3 and the esterase activity of sws.

It localises to the endoplasmic reticulum membrane. The enzyme catalyses a 1-acyl-sn-glycero-3-phosphocholine + H2O = sn-glycerol 3-phosphocholine + a fatty acid + H(+). Its function is as follows. Phospholipase B that deacylates intracellular phosphatidylcholine (PtdCho), generating glycerophosphocholine (GroPtdCho). This deacylation occurs at both sn-2 and sn-1 positions of PtdCho. Its specific chemical modification by certain organophosphorus (OP) compounds leads to distal axonopathy. Plays a role in the signaling mechanism between neurons and glia that regulates glia wrapping during development of the adult brain. Essential for membrane lipid homeostasis and cell survival in both neurons and glia of the adult brain. The polypeptide is Neuropathy target esterase sws (Drosophila persimilis (Fruit fly)).